The primary structure comprises 344 residues: Uroporphyrinogen decarboxylase (344 aa).

Substrate contacts are provided by residues 27–31 (RQAGR), Phe-46, Asp-77, Tyr-153, Thr-208, and His-324.

It belongs to the uroporphyrinogen decarboxylase family. Homodimer.

Its subcellular location is the cytoplasm. It carries out the reaction uroporphyrinogen III + 4 H(+) = coproporphyrinogen III + 4 CO2. Its pathway is porphyrin-containing compound metabolism; protoporphyrin-IX biosynthesis; coproporphyrinogen-III from 5-aminolevulinate: step 4/4. Its function is as follows. Catalyzes the decarboxylation of four acetate groups of uroporphyrinogen-III to yield coproporphyrinogen-III. This Bradyrhizobium diazoefficiens (strain JCM 10833 / BCRC 13528 / IAM 13628 / NBRC 14792 / USDA 110) protein is Uroporphyrinogen decarboxylase.